The sequence spans 207 residues: Ras-related protein Rab-8A (207 aa).

GTP contacts are provided by Ser17, Gly18, Val19, Gly20, Lys21, Thr22, Cys23, Ser35, Ser39, and Thr40. Mg(2+) is bound at residue Thr22. 2 consecutive short sequence motifs (switch) follow at residues 31–45 and 63–80; these read DAFNSTFISTIGIDF and DTAGQERFRTITTAYYRG. Mg(2+) contacts are provided by Thr40 and Asp63. Residue Gly66 coordinates GTP. The residue at position 72 (Thr72) is a Phosphothreonine. Positions 121, 122, 124, 152, and 153 each coordinate GTP. Phosphoserine is present on residues Ser181 and Ser185. Cys204 carries the post-translational modification Cysteine methyl ester. A lipid anchor (S-geranylgeranyl cysteine) is attached at Cys204. A propeptide spans 205–207 (removed in mature form); that stretch reads VLL.

It belongs to the small GTPase superfamily. Rab family. Interacts (GTP-bound form) with MICALL1; regulates RAB8A association with recycling endosomes. Interacts with MICALL2; competes with RAB13 and is involved in E-cadherin endocytic recycling. Interacts (GTP-bound form) with MICAL1, MICALCL, MICAL3, EHBP1 and EHBP1L1; at least in case of MICAL1, MICALCL, MICAL3 and EHBP1L1 two molecules of RAB8A can bind to one molecule of the effector protein; ternary complexes of RAB8A, RAB13 and either MICAL1 or EHBP1L1 are possible. Interacts with EHD1. Interacts with MAP4K2 and SYTL4. Interacts with SGSM1 and SGSM3. Interacts with RABIF, RIMS2, RPH3A and RPH3A. Interacts with OPTN. Interacts with RAB3IP, RAB3IP functions as guanine exchange factor (GEF). Interacts with MYO5B. Interacts with CIMAP3. Interacts with BIRC6/bruce. Interacts with OCRL. Interacts with AHI1. Interacts with DCDC1. Interacts with LRRK2; interaction facilitates phosphorylation of Thr-72. Interacts with RAB31P, GDI1, GDI2, CHM, CHML, RABGGTA, RABGGTB, TBC1D15 and INPP5B; these interactions are dependent on Thr-72 not being phosphorylated. Interacts with RILPL1 and RILPL2; these interactions are dependent on the phosphorylation of Thr-72 by LRRK2. Interacts with DZIP1; prevents inhibition by the GDP-dissociation inhibitor GDI2. Interacts (in GDP-bound form) with RAB3IP/Rabin8, RAB3IP functions as guanine exchange factor (GEF) towards RAB8A. Interacts (in GDP-bound form) with RPGR, RPGR functions as GEF towards RAB8A. Requires Mg(2+) as cofactor. Post-translationally, phosphorylation of Thr-72 in the switch II region by LRRK2 prevents the association of RAB regulatory proteins, including CHM, CHML and RAB GDP dissociation inhibitors GDI1 and GDI2. Phosphorylation by LRRK2 is required for localization to stressed lysosomes.

It localises to the cell membrane. The protein resides in the golgi apparatus. Its subcellular location is the endosome membrane. The protein localises to the recycling endosome membrane. It is found in the cell projection. It localises to the cilium. The protein resides in the cytoplasmic vesicle. Its subcellular location is the phagosome membrane. The protein localises to the cytoplasm. It is found in the cytoskeleton. It localises to the microtubule organizing center. The protein resides in the centrosome. Its subcellular location is the centriole. The protein localises to the cilium basal body. It is found in the midbody. It localises to the lysosome. It catalyses the reaction GTP + H2O = GDP + phosphate + H(+). Its activity is regulated as follows. Regulated by guanine nucleotide exchange factors (GEFs) such as RAB3IP/Rabin8 and RPGR which promote the exchange of bound GDP for free GTP, GTPase activating proteins (GAPs) which increase the GTP hydrolysis activity, and GDP dissociation inhibitors (GDIs) which inhibit the dissociation of the nucleotide from the GTPase. Activated in response to insulin. In terms of biological role, the small GTPases Rab are key regulators of intracellular membrane trafficking, from the formation of transport vesicles to their fusion with membranes. Rabs cycle between an inactive GDP-bound form and an active GTP-bound form that is able to recruit to membranes different sets of downstream effectors directly responsible for vesicle formation, movement, tethering and fusion. RAB8A is involved in polarized vesicular trafficking and neurotransmitter release. Together with RAB11A, RAB3IP, the exocyst complex, PARD3, PRKCI, ANXA2, CDC42 and DNMBP promotes transcytosis of PODXL to the apical membrane initiation sites (AMIS), apical surface formation and lumenogenesis. Regulates the compacted morphology of the Golgi. Together with MYO5B and RAB11A participates in epithelial cell polarization. Also involved in membrane trafficking to the cilium and ciliogenesis. Together with MICALL2, may also regulate adherens junction assembly. May play a role in insulin-induced transport to the plasma membrane of the glucose transporter GLUT4 and therefore play a role in glucose homeostasis. Involved in autophagy. Participates in the export of a subset of neosynthesized proteins through a Rab8-Rab10-Rab11-dependent endososomal export route. Targeted to and stabilized on stressed lysosomes through LRRK2 phosphorylation. Suppresses stress-induced lysosomal enlargement through EHBP1 and EHNP1L1 effector proteins. The polypeptide is Ras-related protein Rab-8A (RAB8A) (Bos taurus (Bovine)).